We begin with the raw amino-acid sequence, 250 residues long: Ribosomal RNA small subunit methyltransferase J (250 aa).

S-adenosyl-L-methionine is bound by residues 101–102 (RD), 117–118 (ER), 153–154 (SS), and Asp-171.

It belongs to the methyltransferase superfamily. RsmJ family.

It is found in the cytoplasm. It carries out the reaction guanosine(1516) in 16S rRNA + S-adenosyl-L-methionine = N(2)-methylguanosine(1516) in 16S rRNA + S-adenosyl-L-homocysteine + H(+). In terms of biological role, specifically methylates the guanosine in position 1516 of 16S rRNA. The polypeptide is Ribosomal RNA small subunit methyltransferase J (Shigella flexneri serotype 5b (strain 8401)).